A 490-amino-acid polypeptide reads, in one-letter code: Ketol-acid reductoisomerase (NADP(+)) (490 aa).

A KARI N-terminal Rossmann domain is found at 15-208 (INLQKCKLID…GSHHAGILHS (194 aa)). Residues 45-48 (CGSQ), arginine 68, serine 78, and 108-110 (DKQ) contribute to the NADP(+) site. Histidine 132 is a catalytic residue. Glycine 158 is an NADP(+) binding site. KARI C-terminal knotted domains follow at residues 209–344 (SFIA…KCNI) and 345–484 (YYKQ…MTSM). Residues aspartate 217, glutamate 221, glutamate 389, and glutamate 393 each contribute to the Mg(2+) site. Residue serine 414 participates in substrate binding.

The protein belongs to the ketol-acid reductoisomerase family. The cofactor is Mg(2+).

The enzyme catalyses (2R)-2,3-dihydroxy-3-methylbutanoate + NADP(+) = (2S)-2-acetolactate + NADPH + H(+). The catalysed reaction is (2R,3R)-2,3-dihydroxy-3-methylpentanoate + NADP(+) = (S)-2-ethyl-2-hydroxy-3-oxobutanoate + NADPH + H(+). The protein operates within amino-acid biosynthesis; L-isoleucine biosynthesis; L-isoleucine from 2-oxobutanoate: step 2/4. It participates in amino-acid biosynthesis; L-valine biosynthesis; L-valine from pyruvate: step 2/4. Its function is as follows. Involved in the biosynthesis of branched-chain amino acids (BCAA). Catalyzes an alkyl-migration followed by a ketol-acid reduction of (S)-2-acetolactate (S2AL) to yield (R)-2,3-dihydroxy-isovalerate. In the isomerase reaction, S2AL is rearranged via a Mg-dependent methyl migration to produce 3-hydroxy-3-methyl-2-ketobutyrate (HMKB). In the reductase reaction, this 2-ketoacid undergoes a metal-dependent reduction by NADPH to yield (R)-2,3-dihydroxy-isovalerate. The polypeptide is Ketol-acid reductoisomerase (NADP(+)) (Buchnera aphidicola subsp. Melaphis rhois).